A 499-amino-acid polypeptide reads, in one-letter code: MELDAILDNLSDEEQIELLELLEEEENYRNTHLLYEFAPYSKQREFIDAGHDYPERCFMAGNQLGKSFTGAAEVAFHLTGRYPGTKGYPADGKYGGEWKGKRFYEPVVFWIGGETNETVTKTTQRILCGRIEENDEPGYGSIPKEDIISWKKSPFFPNLVDHLLVKHHTADGVEDGISICYFKPYSQGRARWQGDTIHGVWFDEEPPYSIYGEGLTRTNKYGQFSILTFTPLMGMSDVVTKFLKNPSKSQKVVNMTIYDAEHYTDEQKEQIIASYPEHEREARARGIPTMGSGRIFQIPEETIKCQPFECPDHFYVIDAQDFGWNHPQAHIQLWWDKDADVFYLARVWKKSENTAVQAWGAVKSWANKIPVAWPHDGHQHEKGGGEQLKTQYADAGFSMLPDHATFPDGGNSVESGISELRDLMLEGRFKVFNTCEPFFEEFRLYHRDENGKIVKTNDDVLDATRYGYMMRRFARMMRDIRKPKEKKIPAPIRPVRRGR.

The interval 1-58 is interaction with the terminase small subunit; it reads MELDAILDNLSDEEQIELLELLEEEENYRNTHLLYEFAPYSKQREFIDAGHDYPERCF. The interval 1-286 is ATPase activity; sequence MELDAILDNL…EHEREARARG (286 aa). A Walker A motif motif is present at residues 60-67; sequence AGNQLGKS. A Walker B motif motif is present at residues 199 to 204; that stretch reads GVWFDE. The active-site For ATPase activity is the glutamate 204. The tract at residues 312–482 is nuclease activity; sequence DHFYVIDAQD…FARMMRDIRK (171 aa). Mg(2+) is bound by residues aspartate 321 and aspartate 459.

The protein belongs to the Lederbergvirus large terminase family. In terms of assembly, interacts with the terminase small subunit; the active complex is composed of dimer of terminase large subunits and a nonamer ring of terminase small subunits. Interacts with the portal protein; this interaction allows the packaging of viral DNA. Requires Mg(2+) as cofactor.

In terms of biological role, the terminase large subunit acts as an ATP driven molecular motor necessary for viral DNA translocation into empty capsids and as an endonuclease that cuts the viral genome to initiate and to end a packaging reaction. The terminase lies at a unique vertex of the procapsid and is composed of two subunits, a small terminase subunit involved in viral DNA recognition (packaging 'pac' sequence), and a large terminase subunit possessing endonucleolytic and ATPase activities. Both terminase subunits heterooligomerize and are docked on the portal protein to form the packaging machine. Once the capsid is packaged with the DNA (headful packaging), the terminase cleaves the viral genome concatemer and is substituted by the tail. This Salmonella phage P22 (Bacteriophage P22) protein is Terminase, large subunit (2).